Consider the following 215-residue polypeptide: Cytochrome b6 (215 aa).

A helical membrane pass occupies residues 32–52; sequence IFHCLGGITLTCFLVQVATGF. Residue cysteine 35 participates in heme c binding. The heme b site is built by histidine 86 and histidine 100. A run of 3 helical transmembrane segments spans residues 90-110, 116-136, and 186-206; these read ASMMVLMMILHVFRVYLTGGF, LTWVTGVVLAVLTASFGVTGY, and LHTFVLPLLTAVFMLMHFSMI. The heme b site is built by histidine 187 and histidine 202.

This sequence belongs to the cytochrome b family. PetB subfamily. As to quaternary structure, the 4 large subunits of the cytochrome b6-f complex are cytochrome b6, subunit IV (17 kDa polypeptide, PetD), cytochrome f and the Rieske protein, while the 4 small subunits are PetG, PetL, PetM and PetN. The complex functions as a dimer. The cofactor is heme b. Heme c serves as cofactor.

It is found in the plastid. Its subcellular location is the chloroplast thylakoid membrane. Its function is as follows. Component of the cytochrome b6-f complex, which mediates electron transfer between photosystem II (PSII) and photosystem I (PSI), cyclic electron flow around PSI, and state transitions. The chain is Cytochrome b6 from Nymphaea alba (White water-lily).